We begin with the raw amino-acid sequence, 206 residues long: Thymidylate kinase (206 aa).

Residue 11 to 18 (GIDGAGKT) coordinates ATP.

Belongs to the thymidylate kinase family.

The catalysed reaction is dTMP + ATP = dTDP + ADP. Phosphorylation of dTMP to form dTDP in both de novo and salvage pathways of dTTP synthesis. This is Thymidylate kinase from Burkholderia mallei (strain NCTC 10247).